The sequence spans 1320 residues: Clustered mitochondria protein homolog (1320 aa).

3 disordered regions span residues 166–241 (QQLE…KQKM), 552–582 (YGSMDTPTNEEEEQQQKEENEENKNNNTKSI), and 683–708 (LKEKEERQKKEGIDPPTATARDEDVQ). The segment covering 185–194 (TEDKEEKETI) has biased composition (basic and acidic residues). The segment covering 202 to 213 (KKNKHHNKKGNK) has biased composition (basic residues). 3 stretches are compositionally biased toward basic and acidic residues: residues 226 to 241 (NEEKLTPQQKERKQKM), 565 to 575 (QQQKEENEENK), and 683 to 695 (LKEKEERQKKEGI). The 271-residue stretch at 379 to 649 (KTNRYDINKG…KATPRDPNYT (271 aa)) folds into the Clu domain. TPR repeat units lie at residues 955 to 988 (GLDLLEAGKTFFNQRKYELATELLGEALAIYHQV), 997 to 1030 (GACFTHLAMLAYQNEQYDLAIEYQKNALVITEKT), 1039 to 1072 (VQAYTTLAVFCQRSGRYNESIGYMKHVLYLTDLL), 1081 to 1114 (ASIYTAIAAILEDTERFDLALEFLKQTLKHQEFL), and 1123 to 1156 (STTYHKMAIVCARATNFDDSIIHQKKSTDILEKE). The tract at residues 1204–1320 (KADQFKKSQP…SKPNKKSSKN (117 aa)) is disordered. Residues 1237 to 1247 (KPKKSQSKKSK) show a composition bias toward basic residues. Residues 1248–1311 (STNTTTTTNT…PTSSSAADSS (64 aa)) show a composition bias toward low complexity.

Belongs to the CLU family.

Its subcellular location is the cytoplasm. Its function is as follows. mRNA-binding protein involved in proper cytoplasmic distribution of mitochondria. The polypeptide is Clustered mitochondria protein homolog (Dictyostelium discoideum (Social amoeba)).